We begin with the raw amino-acid sequence, 219 residues long: Large ribosomal subunit protein uL3 (219 aa).

Belongs to the universal ribosomal protein uL3 family. In terms of assembly, part of the 50S ribosomal subunit. Forms a cluster with proteins L14 and L19.

Its function is as follows. One of the primary rRNA binding proteins, it binds directly near the 3'-end of the 23S rRNA, where it nucleates assembly of the 50S subunit. This chain is Large ribosomal subunit protein uL3, found in Corynebacterium kroppenstedtii (strain DSM 44385 / JCM 11950 / CIP 105744 / CCUG 35717).